The chain runs to 329 residues: Gibberellin 2-beta-dioxygenase 1 (329 aa).

Positions 165–273 constitute a Fe2OG dioxygenase domain; sequence NTDSILRLNH…RVSMIYFAGP (109 aa). Fe cation is bound by residues H197, D199, and H254. Residue R264 is part of the active site. R264 is a binding site for 2-oxoglutarate.

This sequence belongs to the iron/ascorbate-dependent oxidoreductase family. GA2OX subfamily. It depends on Fe(2+) as a cofactor. Preferentially expressed in flowers, siliques, and upper stems. Not expressed in the apex.

The catalysed reaction is gibberellin A1 + 2-oxoglutarate + O2 = gibberellin A8 + succinate + CO2. The protein operates within plant hormone biosynthesis; gibberellin biosynthesis. Its function is as follows. Catalyzes the 2-beta-hydroxylation of several biologically active gibberellins, leading to the homeostatic regulation of their endogenous level. Catabolism of gibberellins (GAs) plays a central role in plant development. Converts GA9/GA20 to GA51/GA29 and GA4/GA1 to GA34/GA8. The chain is Gibberellin 2-beta-dioxygenase 1 (GA2OX1) from Arabidopsis thaliana (Mouse-ear cress).